Consider the following 49-residue polypeptide: Large ribosomal subunit protein bL33A (49 aa).

Belongs to the bacterial ribosomal protein bL33 family.

The polypeptide is Large ribosomal subunit protein bL33A (Streptococcus pneumoniae (strain Hungary19A-6)).